A 456-amino-acid polypeptide reads, in one-letter code: Enolase (456 aa).

Residue Gln164 coordinates (2R)-2-phosphoglycerate. Residue Glu207 is the Proton donor of the active site. Positions 244, 287, and 314 each coordinate Mg(2+). Residues Lys339, Arg368, Ser369, and Lys390 each contribute to the (2R)-2-phosphoglycerate site. The Proton acceptor role is filled by Lys339.

It belongs to the enolase family. In terms of assembly, component of the RNA degradosome, a multiprotein complex involved in RNA processing and mRNA degradation. It depends on Mg(2+) as a cofactor.

It is found in the cytoplasm. The protein resides in the secreted. The protein localises to the cell surface. The catalysed reaction is (2R)-2-phosphoglycerate = phosphoenolpyruvate + H2O. Its pathway is carbohydrate degradation; glycolysis; pyruvate from D-glyceraldehyde 3-phosphate: step 4/5. Catalyzes the reversible conversion of 2-phosphoglycerate (2-PG) into phosphoenolpyruvate (PEP). It is essential for the degradation of carbohydrates via glycolysis. The chain is Enolase from Francisella tularensis subsp. holarctica (strain LVS).